The sequence spans 223 residues: Small ribosomal subunit protein uS5 (223 aa).

Residues 1-66 (MPPQQQRGRG…AERAQAETEF (66 aa)) form a disordered region. The span at 13 to 22 (RGPGGPGGPG) shows a compositional bias: gly residues. Over residues 53–66 (GGDKAERAQAETEF) the composition is skewed to basic and acidic residues. The region spanning 66–129 (FQERVVQIRR…SDARKALIRV (64 aa)) is the S5 DRBM domain.

Belongs to the universal ribosomal protein uS5 family. As to quaternary structure, part of the 30S ribosomal subunit. Contacts proteins S4 and S8.

Functionally, with S4 and S12 plays an important role in translational accuracy. Located at the back of the 30S subunit body where it stabilizes the conformation of the head with respect to the body. This is Small ribosomal subunit protein uS5 from Gloeobacter violaceus (strain ATCC 29082 / PCC 7421).